Consider the following 221-residue polypeptide: GTP cyclohydrolase 1 (221 aa).

Zn(2+) is bound by residues Cys111, His114, and Cys182.

The protein belongs to the GTP cyclohydrolase I family. In terms of assembly, homomer.

It carries out the reaction GTP + H2O = 7,8-dihydroneopterin 3'-triphosphate + formate + H(+). It participates in cofactor biosynthesis; 7,8-dihydroneopterin triphosphate biosynthesis; 7,8-dihydroneopterin triphosphate from GTP: step 1/1. The polypeptide is GTP cyclohydrolase 1 (Erwinia tasmaniensis (strain DSM 17950 / CFBP 7177 / CIP 109463 / NCPPB 4357 / Et1/99)).